The chain runs to 382 residues: D-galactonate dehydratase 1 (382 aa).

A Mg(2+)-binding site is contributed by Asp183. Catalysis depends on His185, which acts as the Proton donor. Mg(2+)-binding residues include Glu209 and Glu235. His285 (proton acceptor) is an active-site residue.

It belongs to the mandelate racemase/muconate lactonizing enzyme family. GalD subfamily. Mg(2+) is required as a cofactor.

It catalyses the reaction D-galactonate = 2-dehydro-3-deoxy-D-galactonate + H2O. The protein operates within carbohydrate acid metabolism; D-galactonate degradation; D-glyceraldehyde 3-phosphate and pyruvate from D-galactonate: step 1/3. In terms of biological role, catalyzes the dehydration of D-galactonate to 2-keto-3-deoxy-D-galactonate. This Escherichia coli (strain SMS-3-5 / SECEC) protein is D-galactonate dehydratase 1.